The following is a 146-amino-acid chain: Vascular endothelial growth factor A (146 aa).

The signal sequence occupies residues 1 to 26; the sequence is MNFLLSWVHWSLALLLYLHHAKWSQA. 3 cysteine pairs are disulfide-bonded: cysteine 51/cysteine 93, cysteine 82/cysteine 127, and cysteine 86/cysteine 129. A glycan (N-linked (GlcNAc...) asparagine) is linked at asparagine 100.

It belongs to the PDGF/VEGF growth factor family. As to quaternary structure, homodimer; disulfide-linked. Also found as heterodimer with PGF. Interacts with NRP1. Interacts with isoform 2 of BSG. Interacts with CD82; this interaction inhibits VEGFA-mediated signaling pathway.

Growth factor active in angiogenesis, vasculogenesis and endothelial cell growth. Induces endothelial cell proliferation, promotes cell migration, inhibits apoptosis and induces permeabilization of blood vessels. Binds to the FLT1/VEGFR1 and KDR/VEGFR2 receptors, heparan sulfate and heparin. Binding to NRP1 receptor initiates a signaling pathway needed for motor neuron axon guidance and cell body migration, including for the caudal migration of facial motor neurons from rhombomere 4 to rhombomere 6 during embryonic development. Also binds the DEAR/FBXW7-AS1 receptor. This chain is Vascular endothelial growth factor A (VEGFA), found in Ovis aries (Sheep).